The sequence spans 209 residues: Thiamine-phosphate synthase (209 aa).

4-amino-2-methyl-5-(diphosphooxymethyl)pyrimidine-binding positions include 38–42 (QYRDK) and Asn70. 2 residues coordinate Mg(2+): Asp71 and Asp89. Thr108 lines the 4-amino-2-methyl-5-(diphosphooxymethyl)pyrimidine pocket. 2-[(2R,5Z)-2-carboxy-4-methylthiazol-5(2H)-ylidene]ethyl phosphate is bound at residue 135-137 (SNT). Position 138 (Lys138) interacts with 4-amino-2-methyl-5-(diphosphooxymethyl)pyrimidine. Position 165 (Gly165) interacts with 2-[(2R,5Z)-2-carboxy-4-methylthiazol-5(2H)-ylidene]ethyl phosphate.

Belongs to the thiamine-phosphate synthase family. Mg(2+) serves as cofactor.

It carries out the reaction 2-[(2R,5Z)-2-carboxy-4-methylthiazol-5(2H)-ylidene]ethyl phosphate + 4-amino-2-methyl-5-(diphosphooxymethyl)pyrimidine + 2 H(+) = thiamine phosphate + CO2 + diphosphate. It catalyses the reaction 2-(2-carboxy-4-methylthiazol-5-yl)ethyl phosphate + 4-amino-2-methyl-5-(diphosphooxymethyl)pyrimidine + 2 H(+) = thiamine phosphate + CO2 + diphosphate. The enzyme catalyses 4-methyl-5-(2-phosphooxyethyl)-thiazole + 4-amino-2-methyl-5-(diphosphooxymethyl)pyrimidine + H(+) = thiamine phosphate + diphosphate. It functions in the pathway cofactor biosynthesis; thiamine diphosphate biosynthesis; thiamine phosphate from 4-amino-2-methyl-5-diphosphomethylpyrimidine and 4-methyl-5-(2-phosphoethyl)-thiazole: step 1/1. Condenses 4-methyl-5-(beta-hydroxyethyl)thiazole monophosphate (THZ-P) and 2-methyl-4-amino-5-hydroxymethyl pyrimidine pyrophosphate (HMP-PP) to form thiamine monophosphate (TMP). The protein is Thiamine-phosphate synthase of Ectopseudomonas mendocina (strain ymp) (Pseudomonas mendocina).